The primary structure comprises 74 residues: DNA-directed RNA polymerase subunit omega (74 aa).

Belongs to the RNA polymerase subunit omega family. In terms of assembly, the RNAP catalytic core consists of 2 alpha, 1 beta, 1 beta' and 1 omega subunit. When a sigma factor is associated with the core the holoenzyme is formed, which can initiate transcription.

It carries out the reaction RNA(n) + a ribonucleoside 5'-triphosphate = RNA(n+1) + diphosphate. Promotes RNA polymerase assembly. Latches the N- and C-terminal regions of the beta' subunit thereby facilitating its interaction with the beta and alpha subunits. This is DNA-directed RNA polymerase subunit omega from Helicobacter pylori (strain Shi470).